We begin with the raw amino-acid sequence, 249 residues long: Tryptophan synthase alpha chain (249 aa).

Catalysis depends on proton acceptor residues glutamate 43 and aspartate 54.

This sequence belongs to the TrpA family. In terms of assembly, tetramer of two alpha and two beta chains.

The enzyme catalyses (1S,2R)-1-C-(indol-3-yl)glycerol 3-phosphate + L-serine = D-glyceraldehyde 3-phosphate + L-tryptophan + H2O. The protein operates within amino-acid biosynthesis; L-tryptophan biosynthesis; L-tryptophan from chorismate: step 5/5. Its function is as follows. The alpha subunit is responsible for the aldol cleavage of indoleglycerol phosphate to indole and glyceraldehyde 3-phosphate. The sequence is that of Tryptophan synthase alpha chain from Campylobacter jejuni subsp. jejuni serotype O:6 (strain 81116 / NCTC 11828).